Consider the following 248-residue polypeptide: Ureidoacrylate amidohydrolase RutB (248 aa).

Residue Asp-43 is the Proton acceptor of the active site. Lys-152 is an active-site residue. The Nucleophile role is filled by Cys-185.

This sequence belongs to the isochorismatase family. RutB subfamily.

The catalysed reaction is (Z)-3-ureidoacrylate + H2O + H(+) = (Z)-3-aminoacrylate + NH4(+) + CO2. It catalyses the reaction (Z)-3-ureidoacrylate + H2O = (Z)-3-aminoacrylate + carbamate + H(+). The enzyme catalyses (Z)-2-methylureidoacrylate + H2O + H(+) = (Z)-2-methylaminoacrylate + NH4(+) + CO2. Functionally, hydrolyzes ureidoacrylate to form aminoacrylate and carbamate. The carbamate hydrolyzes spontaneously, thereby releasing one of the nitrogen atoms of the pyrimidine ring as ammonia and one of its carbon atoms as CO2. The sequence is that of Ureidoacrylate amidohydrolase RutB from Serratia proteamaculans (strain 568).